A 33-amino-acid polypeptide reads, in one-letter code: MSDIN-like toxin proprotein 5 (33 aa).

Residues 1–10 (MSDINATRLP) constitute a propeptide that is removed on maturation. The cyclopeptide (Ile-Pro) cross-link spans 11 to 18 (IFWFIYFP). Positions 19–32 (CVGDNVDNTLTRGE) are excised as a propeptide.

It belongs to the MSDIN fungal toxin family. Post-translationally, processed by the macrocyclase-peptidase enzyme POPB to yield a toxic cyclic octapeptide. POPB first removes 10 residues from the N-terminus. Conformational trapping of the remaining peptide forces the enzyme to release this intermediate rather than proceed to macrocyclization. The enzyme rebinds the remaining peptide in a different conformation and catalyzes macrocyclization of the N-terminal 8 residues.

In terms of biological role, probable toxin that belongs to the MSDIN-like toxin family responsible for a large number of food poisoning cases and deaths. This Amanita phalloides (Death cap) protein is MSDIN-like toxin proprotein 5.